The chain runs to 190 residues: NADH dehydrogenase [ubiquinone] iron-sulfur protein 3 (190 aa).

It belongs to the complex I 30 kDa subunit family. In terms of assembly, complex I is composed of about 45 different subunits. This is a component of the iron-sulfur (IP) fragment of the enzyme.

It is found in the mitochondrion inner membrane. It catalyses the reaction a ubiquinone + NADH + 5 H(+)(in) = a ubiquinol + NAD(+) + 4 H(+)(out). Core subunit of the mitochondrial membrane respiratory chain NADH dehydrogenase (Complex I) that is believed to belong to the minimal assembly required for catalysis. Complex I functions in the transfer of electrons from NADH to the respiratory chain. The immediate electron acceptor for the enzyme is believed to be ubiquinone. In Oryza sativa subsp. japonica (Rice), this protein is NADH dehydrogenase [ubiquinone] iron-sulfur protein 3 (NAD9).